Here is an 88-residue protein sequence, read N- to C-terminus: Small ribosomal subunit protein bS20 (88 aa).

This sequence belongs to the bacterial ribosomal protein bS20 family.

Its function is as follows. Binds directly to 16S ribosomal RNA. In Syntrophomonas wolfei subsp. wolfei (strain DSM 2245B / Goettingen), this protein is Small ribosomal subunit protein bS20.